We begin with the raw amino-acid sequence, 247 residues long: MRITQFLASKLKNFSNLPKEYIERSKKQVYWQTPREKNYLPRTVERKRFRYTTNRPWTGQFRQQNMPATMRRKVLIEPVEDWSFFRGDRIEVLVGKDKGKQGIVTQVIPERNWVIVEGLNWHYRRVGAEKEFPGIIIKSEAPLHVLNDIRLVDPSDLLGTEFEWRFTEEGEKVRVSMRSGRIIPIPETNNQTHDYKTPNAYIEREKDTPAAVVGEITFQPKLSTFEMDIMEEMGIKEERTPAKSYWY.

Residues 84–117 form the KOW domain; it reads FFRGDRIEVLVGKDKGKQGIVTQVIPERNWVIVE.

This sequence belongs to the universal ribosomal protein uL24 family. As to quaternary structure, component of the mitochondrial ribosome large subunit (39S) which comprises a 16S rRNA and about 50 distinct proteins.

The protein resides in the mitochondrion. In Drosophila pseudoobscura pseudoobscura (Fruit fly), this protein is Large ribosomal subunit protein uL24m (mRpL24).